The following is a 424-amino-acid chain: UPF0761 membrane protein Smal_0716 (424 aa).

6 consecutive transmembrane segments (helical) span residues 48 to 68 (VFALVPLAIVVFGVLSAFPVF), 101 to 121 (SAGQLTAAGFIALVVSLLITL), 144 to 164 (FLVYWTVLTLGAMLAAASLAV), 181 to 201 (WLADLALRLAPILIEFVCITL), 216 to 236 (AVPGAILAAVILELVKWGIGA), and 251 to 271 (VAFVPILLLWIYLCWVAVLLG).

The protein belongs to the UPF0761 family.

The protein localises to the cell inner membrane. The polypeptide is UPF0761 membrane protein Smal_0716 (Stenotrophomonas maltophilia (strain R551-3)).